The sequence spans 65 residues: Photosystem II reaction center protein H (65 aa).

Residues 27–47 form a helical membrane-spanning segment; sequence GAVPVMAFIGVLLLVFLVIML.

It belongs to the PsbH family. PSII is composed of 1 copy each of membrane proteins PsbA, PsbB, PsbC, PsbD, PsbE, PsbF, PsbH, PsbI, PsbJ, PsbK, PsbL, PsbM, PsbT, PsbX, PsbY, Psb30/Ycf12, peripheral proteins PsbO, CyanoQ (PsbQ), PsbU, PsbV and a large number of cofactors. It forms dimeric complexes.

The protein resides in the cellular thylakoid membrane. One of the components of the core complex of photosystem II (PSII), required for its stability and/or assembly. PSII is a light-driven water:plastoquinone oxidoreductase that uses light energy to abstract electrons from H(2)O, generating O(2) and a proton gradient subsequently used for ATP formation. It consists of a core antenna complex that captures photons, and an electron transfer chain that converts photonic excitation into a charge separation. This is Photosystem II reaction center protein H from Prochlorococcus marinus (strain NATL1A).